Consider the following 180-residue polypeptide: NAD(P)H-quinone oxidoreductase subunit 6, chloroplastic (180 aa).

Transmembrane regions (helical) follow at residues 10–30 (LLLAPLTLSLIFGGIGVVLLT), 32–52 (IIYSALSLGLVLICISFFYII), 57–77 (FVAVAQILIYIGAVNILILFA), 102–122 (IVCTSLFCSLITIILNISWFG), and 153–173 (FLPFELISIILLVALIGAITI).

It belongs to the complex I subunit 6 family. NDH is composed of at least 16 different subunits, 5 of which are encoded in the nucleus.

Its subcellular location is the plastid. It localises to the chloroplast thylakoid membrane. The enzyme catalyses a plastoquinone + NADH + (n+1) H(+)(in) = a plastoquinol + NAD(+) + n H(+)(out). It carries out the reaction a plastoquinone + NADPH + (n+1) H(+)(in) = a plastoquinol + NADP(+) + n H(+)(out). NDH shuttles electrons from NAD(P)H:plastoquinone, via FMN and iron-sulfur (Fe-S) centers, to quinones in the photosynthetic chain and possibly in a chloroplast respiratory chain. The immediate electron acceptor for the enzyme in this species is believed to be plastoquinone. Couples the redox reaction to proton translocation, and thus conserves the redox energy in a proton gradient. The sequence is that of NAD(P)H-quinone oxidoreductase subunit 6, chloroplastic (ndhG) from Cryptomeria japonica (Japanese cedar).